The chain runs to 320 residues: Tetraspanin-32 (320 aa).

Transmembrane regions (helical) follow at residues 14–34 (MLVTCFFILLLGLSVATMVTL), 60–80 (WAFSAGLSLVGLLTLGAVLSA), 90–110 (LMAGGFLCFSLAFCAQVQVVF), and 203–223 (SIGLALTVSALLFSSFLWFAI).

Belongs to the tetraspanin (TM4SF) family. As to expression, expressed ubiquitously at low levels. High levels of expression are confined to hematopoietic tissues including peripheral blood leukocytes, thymus and spleen.

It localises to the membrane. This Homo sapiens (Human) protein is Tetraspanin-32 (TSPAN32).